The chain runs to 683 residues: Probable serine/threonine-protein kinase HAL5-like (683 aa).

Disordered stretches follow at residues 1 to 90 and 157 to 200; these read MPQQ…VSDE and YPQN…SKKA. Positions 36–48 are enriched in low complexity; the sequence is PSSAATSDSSEMS. Over residues 50 to 60 the composition is skewed to gly residues; sequence AQGGRGNGLLG. The span at 69 to 85 shows a compositional bias: polar residues; it reads SPKSEAQFTQRNKSAES. Residues 364–670 enclose the Protein kinase domain; it reads GKCIGMIGQG…IPKLLDTPWM (307 aa). ATP contacts are provided by residues 370–378 and K411; that span reads IGQGAYGTV. D521 acts as the Proton acceptor in catalysis.

Belongs to the protein kinase superfamily. CAMK Ser/Thr protein kinase family. NPR/HAL subfamily. HAL5 sub-subfamily.

It carries out the reaction L-seryl-[protein] + ATP = O-phospho-L-seryl-[protein] + ADP + H(+). The enzyme catalyses L-threonyl-[protein] + ATP = O-phospho-L-threonyl-[protein] + ADP + H(+). In Eremothecium gossypii (strain ATCC 10895 / CBS 109.51 / FGSC 9923 / NRRL Y-1056) (Yeast), this protein is Probable serine/threonine-protein kinase HAL5-like.